Here is a 252-residue protein sequence, read N- to C-terminus: 2-succinyl-6-hydroxy-2,4-cyclohexadiene-1-carboxylate synthase (252 aa).

It belongs to the AB hydrolase superfamily. MenH family. As to quaternary structure, monomer.

The enzyme catalyses 5-enolpyruvoyl-6-hydroxy-2-succinyl-cyclohex-3-ene-1-carboxylate = (1R,6R)-6-hydroxy-2-succinyl-cyclohexa-2,4-diene-1-carboxylate + pyruvate. Its pathway is quinol/quinone metabolism; 1,4-dihydroxy-2-naphthoate biosynthesis; 1,4-dihydroxy-2-naphthoate from chorismate: step 3/7. It participates in quinol/quinone metabolism; menaquinone biosynthesis. Functionally, catalyzes a proton abstraction reaction that results in 2,5-elimination of pyruvate from 2-succinyl-5-enolpyruvyl-6-hydroxy-3-cyclohexene-1-carboxylate (SEPHCHC) and the formation of 2-succinyl-6-hydroxy-2,4-cyclohexadiene-1-carboxylate (SHCHC). This is 2-succinyl-6-hydroxy-2,4-cyclohexadiene-1-carboxylate synthase from Escherichia coli (strain SE11).